Consider the following 1188-residue polypeptide: AT-rich interactive domain-containing protein 5B (1188 aa).

Residue lysine 130 forms a Glycyl lysine isopeptide (Lys-Gly) (interchain with G-Cter in SUMO2) linkage. The interval 251-277 (RPRKKKPCPQRRDSFSGVKDSNNNSDG) is disordered. Serine 264 carries the phosphoserine modification. Residues 318 to 410 (RADEQAFLVA…LILPYERFIK (93 aa)) enclose the ARID domain. Position 336 is an N6,N6-dimethyllysine (lysine 336). Residues 412 to 611 (EEDKPLPPIK…QPPLANQNET (200 aa)) are disordered. A Glycyl lysine isopeptide (Lys-Gly) (interchain with G-Cter in SUMO2) cross-link involves residue lysine 445. A compositionally biased stretch (basic and acidic residues) spans 446 to 458 (HEIPKSKKEKENA). Glycyl lysine isopeptide (Lys-Gly) (interchain with G-Cter in SUMO2) cross-links involve residues lysine 494 and lysine 496. Positions 597–609 (SFPTTQPPLANQN) are enriched in polar residues. Glycyl lysine isopeptide (Lys-Gly) (interchain with G-Cter in SUMO2) cross-links involve residues lysine 767, lysine 774, lysine 803, and lysine 810. Disordered regions lie at residues 846 to 874 (HHLH…PSHR) and 891 to 918 (DKKS…HKPT). The segment covering 847-866 (HLHNEQTSKYPSRDMYRESE) has biased composition (basic and acidic residues). Glycyl lysine isopeptide (Lys-Gly) (interchain with G-Cter in SUMO2) cross-links involve residues lysine 893, lysine 916, lysine 920, and lysine 935. A disordered region spans residues 956–978 (RVSPMTMSGPKKYPESLSRSGKP). Glycyl lysine isopeptide (Lys-Gly) (interchain with G-Cter in SUMO2) cross-links involve residues lysine 988, lysine 1000, and lysine 1013. Positions 1028–1070 (ARAVSPLDPSKEVSGKEKASEQESEGSKAAHGGHSGGGSEGHK) are disordered. Serine 1032 carries the post-translational modification Phosphoserine. Over residues 1036–1055 (PSKEVSGKEKASEQESEGSK) the composition is skewed to basic and acidic residues. Residues lysine 1055 and lysine 1070 each participate in a glycyl lysine isopeptide (Lys-Gly) (interchain with G-Cter in SUMO2) cross-link. Serine 1133 bears the Phosphoserine mark.

This sequence belongs to the ARID5B family. Post-translationally, methylation at Lys-336 prevents DNA-binding. Demethylation by PHF2 promotes recruitment of the PHF2-ARID5B complex to promoters. Widely expressed, including in liver (at protein level).

The protein resides in the nucleus. Transcription coactivator that binds to the 5'-AATA[CT]-3' core sequence and plays a key role in adipogenesis and liver development. Acts by forming a complex with phosphorylated PHF2, which mediates demethylation at Lys-336, leading to target the PHF2-ARID5B complex to target promoters, where PHF2 mediates demethylation of dimethylated 'Lys-9' of histone H3 (H3K9me2), followed by transcription activation of target genes. The PHF2-ARID5B complex acts as a coactivator of HNF4A in liver. Required for adipogenesis: regulates triglyceride metabolism in adipocytes by regulating expression of adipogenic genes. Overexpression leads to induction of smooth muscle marker genes, suggesting that it may also act as a regulator of smooth muscle cell differentiation and proliferation. Represses the cytomegalovirus enhancer. This is AT-rich interactive domain-containing protein 5B (ARID5B) from Homo sapiens (Human).